The primary structure comprises 319 residues: MIDLAPLVRRLAGTPLADWANGLQAQLDTKMAKGHGDLQRWQSALDALPDLQPERIDLIDSFTLEAECNGETRTVLRKALLGLSPWRKGPFNVFGVHIDTEWRSDWKWSRVSPHLDLKGKRVLDVGCGNGYYQWRMLGAGADSVIGVDPNWLFFCQFQAMQRYLPDLPAWHLPFALEDLPANLEGFDTVFSMGVLYHRKSPIDHLLALKDCLVKGGELVMETLVVPGDVHQVLVPEDRYAQMRNVWFLPSVPALELWMRRAGFTDVRCVDVSHTTVDEQRSTEWMRFQSLSDYLDPTDHSKTVEGLPAPMRAVIVGRKP.

Carboxy-S-adenosyl-L-methionine-binding positions include K88, W102, K107, G126, 176 to 177 (LE), M192, Y196, and R311.

The protein belongs to the class I-like SAM-binding methyltransferase superfamily. CmoB family. In terms of assembly, homotetramer.

The enzyme catalyses carboxy-S-adenosyl-L-methionine + 5-hydroxyuridine(34) in tRNA = 5-carboxymethoxyuridine(34) in tRNA + S-adenosyl-L-homocysteine + H(+). In terms of biological role, catalyzes carboxymethyl transfer from carboxy-S-adenosyl-L-methionine (Cx-SAM) to 5-hydroxyuridine (ho5U) to form 5-carboxymethoxyuridine (cmo5U) at position 34 in tRNAs. In Pseudomonas syringae pv. syringae (strain B728a), this protein is tRNA U34 carboxymethyltransferase.